Here is a 132-residue protein sequence, read N- to C-terminus: Small ribosomal subunit protein uS8 (132 aa).

This sequence belongs to the universal ribosomal protein uS8 family. As to quaternary structure, part of the 30S ribosomal subunit. Contacts proteins S5 and S12.

Its function is as follows. One of the primary rRNA binding proteins, it binds directly to 16S rRNA central domain where it helps coordinate assembly of the platform of the 30S subunit. The protein is Small ribosomal subunit protein uS8 of Tropheryma whipplei (strain Twist) (Whipple's bacillus).